The following is a 310-amino-acid chain: Olfactory receptor 5P53 (310 aa).

The Extracellular portion of the chain corresponds to 1–25 (MEAENHTTVAELIILGLTEDPKLCI). N5 is a glycosylation site (N-linked (GlcNAc...) asparagine). Residues 26–46 (VFFVIFLGVYIVTLVGNISII) form a helical membrane-spanning segment. Topologically, residues 47–54 (TLIRISSQ) are cytoplasmic. The chain crosses the membrane as a helical span at residues 55 to 75 (LHTPMYLFLSHLAFVDILYST). Residues 76–99 (SVSVIMHMELLGHGLALPVAACAA) lie on the Extracellular side of the membrane. C97 and C189 are joined by a disulfide. Residues 100 to 120 (QLCITVSFGSAECFLLAAMAY) traverse the membrane as a helical segment. Residues 121–133 (DRYVAICSPLLYS) lie on the Cytoplasmic side of the membrane. The chain crosses the membrane as a helical span at residues 134–154 (TLMSPRVCFLLLGMSYVGGCM). Residues 155-196 (NGWTFTGCLLSLSFCGPNQIDHFFCDFSPLLKLSCSDVSIIG) lie on the Extracellular side of the membrane. A helical transmembrane segment spans residues 197–217 (IIPSISSGSIIVVTVFVIAVS). At 218-237 (YIYILITILNMRSTEGRHKA) the chain is on the cytoplasmic side. The chain crosses the membrane as a helical span at residues 238 to 258 (FSTCTSHLTAVTLYYGTITFI). Topologically, residues 259–271 (YVMPKSNYSTEQN) are extracellular. N265 carries an N-linked (GlcNAc...) asparagine glycan. The chain crosses the membrane as a helical span at residues 272–292 (KVLSVFYTVVIPMLNPLIYSL). Residues 293-310 (RNRDVKEALRKATVRVYS) are Cytoplasmic-facing.

Belongs to the G-protein coupled receptor 1 family.

It localises to the cell membrane. Functionally, potential odorant receptor. The polypeptide is Olfactory receptor 5P53 (Mus musculus (Mouse)).